We begin with the raw amino-acid sequence, 1362 residues long: DNA-directed RNA polymerase subunit beta (1362 aa).

The protein belongs to the RNA polymerase beta chain family. In terms of assembly, the RNAP catalytic core consists of 2 alpha, 1 beta, 1 beta' and 1 omega subunit. When a sigma factor is associated with the core the holoenzyme is formed, which can initiate transcription.

It carries out the reaction RNA(n) + a ribonucleoside 5'-triphosphate = RNA(n+1) + diphosphate. DNA-dependent RNA polymerase catalyzes the transcription of DNA into RNA using the four ribonucleoside triphosphates as substrates. This Acinetobacter baumannii (strain AB307-0294) protein is DNA-directed RNA polymerase subunit beta.